The following is a 621-amino-acid chain: Intermediate filament protein ifc-2 (621 aa).

The tract at residues 20–55 (SGAYTSGFGGLVSGMSSAGAICTTQIRDAREREKRE) is head. Positions 52-400 (EKREIGLLND…VLLNGANVTT (349 aa)) constitute an IF rod domain. Positions 56–87 (IGLLNDRLADYIEKVRFLEAQNQCLSHDIDIL) are coil 1A. The segment at 88 to 100 (RRGFSGGGHVSGL) is linker 1. The tract at residues 101–238 (YDTEIAQAKR…TENSTRIEQE (138 aa)) is coil 1B. The interval 239 to 256 (LVFIRRDTTAENRDYFRH) is linker 12. The segment at 257–400 (ELQAAIRDIR…VLLNGANVTT (144 aa)) is coil 2. Positions 401–549 (YVSNTHPSGV…RVDVGGFRVE (149 aa)) are tail. An LTD domain is found at 508–621 (SGRSFHSWYL…EERAWFVYLN (114 aa)).

This sequence belongs to the intermediate filament family.

Its subcellular location is the cytoplasm. Functionally, cytoplasmic intermediate filaments provide mechanical strength to cells. In Caenorhabditis briggsae, this protein is Intermediate filament protein ifc-2.